Consider the following 226-residue polypeptide: TPD1 protein homolog 1A (226 aa).

The signal sequence occupies residues 1-35 (MRVSSASSTPPPPAFAAAAWAVVLLAMLRSDVALA).

In terms of assembly, interacts with MSP1. As to expression, expressed in roots, and anthers and ovules during meiosis.

Involved in cell specification during anther development. Required for the differentiation of primary parietal cells into secondary parietal cells in anthers. May serve as an extracellular ligand for the MSP1 receptor kinase to limit sporocyte number in ovules. This Oryza sativa subsp. japonica (Rice) protein is TPD1 protein homolog 1A.